Reading from the N-terminus, the 991-residue chain is MLQPSPPHYSSSRDVRHHHHHHHHHHHLALSSKARVFPLSLPCNFSSRVSFKLQLHCAASSSSSVSPPRCSKPNPSSRKRKYGGVIPSILRSLDSSTDIETTLASLCLNLSPKEQTVLLKEQTRWERVLRVFRFFQSHQSYVPNVIHYNIVLRALGRAGKWDELRLCWIEMAHNGVLPTNNTYGMLVDVYGKAGLVKEALLWIKHMGQRMHFPDEVTMATVVRVFKNSGEFDRADRFFKGWCAGKVDLDLDSIDDFPKNGSAQSPVNLKQFLSMELFKVGARNPIEKSLHFASGSDSSPRKPRLTSTFNTLIDLYGKAGRLNDAANLFSEMLKSGVPIDTVTFNTMIHTCGTHGHLSEAESLLKKMEEKGISPDTKTYNILLSLHADAGDIEAALEYYRKIRKVGLFPDTVTHRAVLHILCQRKMVAEVEAVIAEMDRNSIRIDEHSVPVIMQMYVNEGLVVQAKALFERFQLDCVLSSTTLAAVIDVYAEKGLWVEAETVFYGKRNMSGQRNDVLEYNVMIKAYGKAKLHEKALSLFKGMKNQGTWPDECTYNSLFQMLAGVDLVDEAQRILAEMLDSGCKPGCKTYAAMIASYVRLGLLSDAVDLYEAMEKTGVKPNEVVYGSLINGFAESGMVEEAIQYFRMMEEHGVQSNHIVLTSLIKAYSKVGCLEEARRVYDKMKDSEGGPDVAASNSMLSLCADLGIVSEAESIFNALREKGTCDVISFATMMYLYKGMGMLDEAIEVAEEMRESGLLSDCTSFNQVMACYAADGQLSECCELFHEMLVERKLLLDWGTFKTLFTLLKKGGVPSEAVSQLQTAYNEAKPLATPAITATLFSAMGLYAYALESCQELTSGEIPREHFAYNAVIYTYSASGDIDMALKAYMRMQEKGLEPDIVTQAYLVGIYGKAGMVEGVKRVHSRLTFGELEPSQSLFKAVRDAYVSANRQDLADVVKKEMSIAFEAERECSSRSGEEEEDDEEENSEEDEAF.

2 disordered regions span residues 1-27 (MLQP…HHHH) and 61-81 (SSSS…RKRK). Over residues 15–27 (VRHHHHHHHHHHH) the composition is skewed to basic residues. Residues 61–73 (SSSSVSPPRCSKP) show a composition bias toward low complexity. PPR repeat units lie at residues 144–178 (NVIH…GVLP), 179–213 (TNNT…MHFP), 214–248 (DEVT…KVDL), 304–338 (LTST…GVPI), 339–373 (DTVT…GISP), 374–408 (DTKT…GLFP), 409–443 (DTVT…SIRI), 444–474 (DEHS…FQLD), 478–513 (SSTT…GQRN), 514–548 (DVLE…GTWP), 549–583 (DECT…GCKP), 584–618 (GCKT…GVKP), 619–653 (NEVV…GVQS), 654–688 (NHIV…EGGP), 689–719 (DVAA…LREK), 723–757 (DVIS…GLLS), 758–792 (DCTS…RKLL), 862–896 (EHFA…GLEP), and 897–931 (DIVT…ELEP). Basic and acidic residues predominate over residues 965-974 (AERECSSRSG). The tract at residues 965 to 991 (AERECSSRSGEEEEDDEEENSEEDEAF) is disordered. Acidic residues predominate over residues 975–991 (EEEEDDEEENSEEDEAF).

This sequence belongs to the PPR family. P subfamily.

This Arabidopsis thaliana (Mouse-ear cress) protein is Pentatricopeptide repeat-containing protein At1g73710.